A 387-amino-acid chain; its full sequence is UDP-N-acetylglucosamine--N-acetylmuramyl-(pentapeptide) pyrophosphoryl-undecaprenol N-acetylglucosamine transferase (387 aa).

A disordered region spans residues 1-22; sequence MSEHVRSAGPPQASTAPSGGSA. UDP-N-acetyl-alpha-D-glucosamine contacts are provided by residues 41–43, N158, R194, S222, I276, and Q321; that span reads TGG.

This sequence belongs to the glycosyltransferase 28 family. MurG subfamily.

It localises to the cell inner membrane. The enzyme catalyses di-trans,octa-cis-undecaprenyl diphospho-N-acetyl-alpha-D-muramoyl-L-alanyl-D-glutamyl-meso-2,6-diaminopimeloyl-D-alanyl-D-alanine + UDP-N-acetyl-alpha-D-glucosamine = di-trans,octa-cis-undecaprenyl diphospho-[N-acetyl-alpha-D-glucosaminyl-(1-&gt;4)]-N-acetyl-alpha-D-muramoyl-L-alanyl-D-glutamyl-meso-2,6-diaminopimeloyl-D-alanyl-D-alanine + UDP + H(+). It participates in cell wall biogenesis; peptidoglycan biosynthesis. Cell wall formation. Catalyzes the transfer of a GlcNAc subunit on undecaprenyl-pyrophosphoryl-MurNAc-pentapeptide (lipid intermediate I) to form undecaprenyl-pyrophosphoryl-MurNAc-(pentapeptide)GlcNAc (lipid intermediate II). This Polaromonas sp. (strain JS666 / ATCC BAA-500) protein is UDP-N-acetylglucosamine--N-acetylmuramyl-(pentapeptide) pyrophosphoryl-undecaprenol N-acetylglucosamine transferase.